Consider the following 241-residue polypeptide: MSLTLLPAVDVADGQAVRLVQGAAGSETVYGDPFDAALAWQRDGAEWIHLVDLDAAFGRGSNAELLADVVRRLDVRVELSGGIRDDASLQAALATGAARVNIGTAALEDPQWCDRVCGEYGDRVAIGLDVRGQTLSARGWTRDGGDLWEVLARLDRAGASRYVVTDITKDGTMRGPNLGLLREVCARTNAPVIASGGISTLADLRALAALEPVGVEGVIAGKALYAGAFTVAEALRTLADA.

D10 (proton acceptor) is an active-site residue. The active-site Proton donor is D129.

Belongs to the HisA/HisF family.

It localises to the cytoplasm. It catalyses the reaction 1-(5-phospho-beta-D-ribosyl)-5-[(5-phospho-beta-D-ribosylamino)methylideneamino]imidazole-4-carboxamide = 5-[(5-phospho-1-deoxy-D-ribulos-1-ylimino)methylamino]-1-(5-phospho-beta-D-ribosyl)imidazole-4-carboxamide. Its pathway is amino-acid biosynthesis; L-histidine biosynthesis; L-histidine from 5-phospho-alpha-D-ribose 1-diphosphate: step 4/9. The protein is 1-(5-phosphoribosyl)-5-[(5-phosphoribosylamino)methylideneamino] imidazole-4-carboxamide isomerase of Salinispora tropica (strain ATCC BAA-916 / DSM 44818 / JCM 13857 / NBRC 105044 / CNB-440).